Reading from the N-terminus, the 330-residue chain is D-lactate dehydrogenase (330 aa).

NAD(+)-binding positions include 156–157, aspartate 176, 206–207, 233–235, and aspartate 259; these read RI, VP, and AAR. Arginine 235 is an active-site residue. Residue glutamate 264 is part of the active site. Histidine 296 functions as the Proton donor in the catalytic mechanism.

This sequence belongs to the D-isomer specific 2-hydroxyacid dehydrogenase family.

It catalyses the reaction (R)-lactate + NAD(+) = pyruvate + NADH + H(+). The protein is D-lactate dehydrogenase (ldhD) of Staphylococcus aureus (strain MSSA476).